Consider the following 112-residue polypeptide: Histone H2A, sperm (112 aa).

At Gln-91 the chain carries N5-methylglutamine. Lys-106 participates in a covalent cross-link: Glycyl lysine isopeptide (Lys-Gly) (interchain with G-Cter in ubiquitin).

This sequence belongs to the histone H2A family. In terms of assembly, the nucleosome is a histone octamer containing two molecules each of H2A, H2B, H3 and H4 assembled in one H3-H4 heterotetramer and two H2A-H2B heterodimers. The octamer wraps approximately 147 bp of DNA. Monoubiquitination gives a specific tag for epigenetic transcriptional repression.

The protein localises to the nucleus. It localises to the chromosome. In terms of biological role, core component of nucleosome. Nucleosomes wrap and compact DNA into chromatin, limiting DNA accessibility to the cellular machineries which require DNA as a template. Histones thereby play a central role in transcription regulation, DNA repair, DNA replication and chromosomal stability. DNA accessibility is regulated via a complex set of post-translational modifications of histones, also called histone code, and nucleosome remodeling. This Lytechinus pictus (Painted sea urchin) protein is Histone H2A, sperm.